A 681-amino-acid polypeptide reads, in one-letter code: DNA-directed RNA polymerase subunit beta' (681 aa).

Zn(2+) is bound by residues Cys-69, Cys-71, Cys-87, and Cys-90. Asp-489, Asp-491, and Asp-493 together coordinate Mg(2+).

Belongs to the RNA polymerase beta' chain family. RpoC1 subfamily. In terms of assembly, in plastids the minimal PEP RNA polymerase catalytic core is composed of four subunits: alpha, beta, beta', and beta''. When a (nuclear-encoded) sigma factor is associated with the core the holoenzyme is formed, which can initiate transcription. Requires Mg(2+) as cofactor. Zn(2+) is required as a cofactor.

The protein resides in the plastid. It localises to the chloroplast. It catalyses the reaction RNA(n) + a ribonucleoside 5'-triphosphate = RNA(n+1) + diphosphate. DNA-dependent RNA polymerase catalyzes the transcription of DNA into RNA using the four ribonucleoside triphosphates as substrates. The sequence is that of DNA-directed RNA polymerase subunit beta' from Anthoceros angustus (Hornwort).